Here is a 519-residue protein sequence, read N- to C-terminus: Bifunctional purine biosynthesis protein PurH (519 aa).

One can recognise an MGS-like domain in the interval 1–145 (MQPIQRALIS…KNHASVTVVV (145 aa)).

The protein belongs to the PurH family.

The enzyme catalyses (6R)-10-formyltetrahydrofolate + 5-amino-1-(5-phospho-beta-D-ribosyl)imidazole-4-carboxamide = 5-formamido-1-(5-phospho-D-ribosyl)imidazole-4-carboxamide + (6S)-5,6,7,8-tetrahydrofolate. The catalysed reaction is IMP + H2O = 5-formamido-1-(5-phospho-D-ribosyl)imidazole-4-carboxamide. It participates in purine metabolism; IMP biosynthesis via de novo pathway; 5-formamido-1-(5-phospho-D-ribosyl)imidazole-4-carboxamide from 5-amino-1-(5-phospho-D-ribosyl)imidazole-4-carboxamide (10-formyl THF route): step 1/1. It functions in the pathway purine metabolism; IMP biosynthesis via de novo pathway; IMP from 5-formamido-1-(5-phospho-D-ribosyl)imidazole-4-carboxamide: step 1/1. The protein is Bifunctional purine biosynthesis protein PurH of Allochromatium vinosum (strain ATCC 17899 / DSM 180 / NBRC 103801 / NCIMB 10441 / D) (Chromatium vinosum).